A 124-amino-acid chain; its full sequence is Fluoride-specific ion channel FluC (124 aa).

A run of 4 helical transmembrane segments spans residues 1 to 21, 35 to 55, 66 to 86, and 99 to 119; these read MFNL…RHLT, WGTM…IAIL, LFVA…SLDF, and FGYA…GLWL. Na(+)-binding residues include Gly-74 and Thr-77.

The protein belongs to the fluoride channel Fluc/FEX (TC 1.A.43) family.

It is found in the cell inner membrane. The enzyme catalyses fluoride(in) = fluoride(out). With respect to regulation, na(+) is not transported, but it plays an essential structural role and its presence is essential for fluoride channel function. Fluoride-specific ion channel. Important for reducing fluoride concentration in the cell, thus reducing its toxicity. The sequence is that of Fluoride-specific ion channel FluC from Mesorhizobium japonicum (strain LMG 29417 / CECT 9101 / MAFF 303099) (Mesorhizobium loti (strain MAFF 303099)).